The following is an 844-amino-acid chain: Meiotically up-regulated gene 61 protein (844 aa).

Disordered stretches follow at residues 333–354 and 384–415; these read ENNS…PQSQ and NFGL…EISS. Polar residues predominate over residues 384–394; sequence NFGLEASNTST. Residues 395 to 407 are compositionally biased toward basic and acidic residues; it reads PEKKKFDSQKPDD. Residues 459 to 479 traverse the membrane as a helical segment; it reads VVNSLWLVLLVVPLLGFVGFW. 605 to 612 serves as a coordination point for ATP; sequence AKNLNGKS. The helical transmembrane segment at 705–725 threads the bilayer; it reads VISCWRIYLLIGILAAITGTV.

Interacts with sad1.

It is found in the endoplasmic reticulum membrane. Its subcellular location is the nucleus membrane. Required for correct meiotic chromosome segregation. The chain is Meiotically up-regulated gene 61 protein (mug61) from Schizosaccharomyces pombe (strain 972 / ATCC 24843) (Fission yeast).